The primary structure comprises 246 residues: tRNA (guanine-N(1)-)-methyltransferase (246 aa).

S-adenosyl-L-methionine contacts are provided by residues Gly113 and 133-138 (IGDYVL).

The protein belongs to the RNA methyltransferase TrmD family. Homodimer.

The protein resides in the cytoplasm. It carries out the reaction guanosine(37) in tRNA + S-adenosyl-L-methionine = N(1)-methylguanosine(37) in tRNA + S-adenosyl-L-homocysteine + H(+). Specifically methylates guanosine-37 in various tRNAs. This is tRNA (guanine-N(1)-)-methyltransferase from Haemophilus influenzae (strain 86-028NP).